A 638-amino-acid chain; its full sequence is Threonine--tRNA ligase (638 aa).

Positions 1 to 61 (MPIITLPDGS…NKDSKVVIIT (61 aa)) constitute a TGS domain. Positions 242–533 (DHRKLGKKHS…LIEQYEAKFP (292 aa)) are catalytic. Positions 333, 384, and 510 each coordinate Zn(2+).

Belongs to the class-II aminoacyl-tRNA synthetase family. As to quaternary structure, homodimer. Requires Zn(2+) as cofactor.

The protein localises to the cytoplasm. It catalyses the reaction tRNA(Thr) + L-threonine + ATP = L-threonyl-tRNA(Thr) + AMP + diphosphate + H(+). Functionally, catalyzes the attachment of threonine to tRNA(Thr) in a two-step reaction: L-threonine is first activated by ATP to form Thr-AMP and then transferred to the acceptor end of tRNA(Thr). Also edits incorrectly charged L-seryl-tRNA(Thr). The sequence is that of Threonine--tRNA ligase from Prochlorococcus marinus (strain MIT 9301).